A 473-amino-acid chain; its full sequence is Photosystem II CP43 reaction center protein (473 aa).

A propeptide spanning residues 1 to 14 is cleaved from the precursor; sequence MKILYSPRRFYPVE. Position 15 is an N-acetylthreonine (Thr15). Position 15 is a phosphothreonine (Thr15). 5 helical membrane-spanning segments follow: residues 69–93, 134–155, 178–200, 255–275, and 291–312; these read LFEV…PHLA, IIGP…KDKN, KALY…RKIT, KPFA…LSYS, and WFNN…ASQA. A [CaMn4O5] cluster-binding site is contributed by Glu367. The helical transmembrane segment at 447–471 threads the bilayer; the sequence is RARAAAAGFEKGIDRDFEPVLSTTP.

Belongs to the PsbB/PsbC family. PsbC subfamily. As to quaternary structure, PSII is composed of 1 copy each of membrane proteins PsbA, PsbB, PsbC, PsbD, PsbE, PsbF, PsbH, PsbI, PsbJ, PsbK, PsbL, PsbM, PsbT, PsbX, PsbY, PsbZ, Psb30/Ycf12, at least 3 peripheral proteins of the oxygen-evolving complex and a large number of cofactors. It forms dimeric complexes. Requires Binds multiple chlorophylls and provides some of the ligands for the Ca-4Mn-5O cluster of the oxygen-evolving complex. It may also provide a ligand for a Cl- that is required for oxygen evolution. PSII binds additional chlorophylls, carotenoids and specific lipids. as cofactor.

It is found in the plastid. Its subcellular location is the chloroplast thylakoid membrane. In terms of biological role, one of the components of the core complex of photosystem II (PSII). It binds chlorophyll and helps catalyze the primary light-induced photochemical processes of PSII. PSII is a light-driven water:plastoquinone oxidoreductase, using light energy to abstract electrons from H(2)O, generating O(2) and a proton gradient subsequently used for ATP formation. This is Photosystem II CP43 reaction center protein from Huperzia lucidula (Shining clubmoss).